The sequence spans 305 residues: 4-diphosphocytidyl-2-C-methyl-D-erythritol kinase (305 aa).

The active site involves K18. 103–113 (PYGAGLGGGSS) provides a ligand contact to ATP. The active site involves D145.

The protein belongs to the GHMP kinase family. IspE subfamily.

It catalyses the reaction 4-CDP-2-C-methyl-D-erythritol + ATP = 4-CDP-2-C-methyl-D-erythritol 2-phosphate + ADP + H(+). It functions in the pathway isoprenoid biosynthesis; isopentenyl diphosphate biosynthesis via DXP pathway; isopentenyl diphosphate from 1-deoxy-D-xylulose 5-phosphate: step 3/6. Functionally, catalyzes the phosphorylation of the position 2 hydroxy group of 4-diphosphocytidyl-2C-methyl-D-erythritol. The sequence is that of 4-diphosphocytidyl-2-C-methyl-D-erythritol kinase from Lawsonia intracellularis (strain PHE/MN1-00).